Here is a 431-residue protein sequence, read N- to C-terminus: tRNA(Ile)-lysidine synthase (431 aa).

An ATP-binding site is contributed by 25-30; that stretch reads SGGLDS.

This sequence belongs to the tRNA(Ile)-lysidine synthase family.

Its subcellular location is the cytoplasm. The catalysed reaction is cytidine(34) in tRNA(Ile2) + L-lysine + ATP = lysidine(34) in tRNA(Ile2) + AMP + diphosphate + H(+). Ligates lysine onto the cytidine present at position 34 of the AUA codon-specific tRNA(Ile) that contains the anticodon CAU, in an ATP-dependent manner. Cytidine is converted to lysidine, thus changing the amino acid specificity of the tRNA from methionine to isoleucine. This is tRNA(Ile)-lysidine synthase from Legionella pneumophila (strain Paris).